Reading from the N-terminus, the 1150-residue chain is ATP-dependent helicase/deoxyribonuclease subunit B (1150 aa).

An ATP-binding site is contributed by 8-15 (GRAGSGKS). Cys-789, Cys-1109, Cys-1112, and Cys-1118 together coordinate [4Fe-4S] cluster.

This sequence belongs to the helicase family. AddB/RexB type 1 subfamily. In terms of assembly, heterodimer of AddA and AddB. Mg(2+) is required as a cofactor. [4Fe-4S] cluster serves as cofactor.

Its function is as follows. The heterodimer acts as both an ATP-dependent DNA helicase and an ATP-dependent, dual-direction single-stranded exonuclease. Recognizes the chi site generating a DNA molecule suitable for the initiation of homologous recombination. The AddB subunit has 5' -&gt; 3' nuclease activity but not helicase activity. This chain is ATP-dependent helicase/deoxyribonuclease subunit B, found in Clostridium kluyveri (strain NBRC 12016).